We begin with the raw amino-acid sequence, 620 residues long: Altered inheritance of mitochondria protein 9, mitochondrial (620 aa).

A mitochondrion-targeting transit peptide spans 1–35; the sequence is MLSRVARNSSLLKQLPKLRQTTVLPVVLKNSIRFH.

The protein belongs to the AIM9 family.

The protein resides in the mitochondrion. The protein is Altered inheritance of mitochondria protein 9, mitochondrial (AIM9) of Candida tropicalis (strain ATCC MYA-3404 / T1) (Yeast).